A 989-amino-acid chain; its full sequence is MTMAGGRRGLVAPQNTFLENIVRRSNDTNFVLGNAQIVDWPIVYSNDGFCKLSGYHRAEVMQKSSTCSFMYGELTDKDTIEKVRQTFENYEMNSFEILMYKKNRTPVWFFVKIAPIRNEQDKVVLFLCTFSDITAFKQPIEDDSCKGWGKFARLTRALTSSRGVLQQLAPSVQKGENVHKHSRLAEVLQLGSDILPQYKQEAPKTPPHIILHYCVFKTTWDWIILILTFYTAILVPYNVSFKTRQNNVAWLVVDSIVDVIFLVDIVLNFHTTFVGPAGEVISDPKLIRMNYLKTWFVIDLLSCLPYDVINAFENVDEVSAFMGDPGKIGFADQIPPPLEGRESQGISSLFSSLKVVRLLRLGRVARKLDHYIEYGAAVLVLLVCVFGLAAHWMACIWYSIGDYEIFDEDTKTIRNNSWLYQLAMDIGTPYQFNGSGSGKWEGGPSKNSVYISSLYFTMTSLTSVGFGNIAPSTDIEKIFAVAIMMIGSLLYATIFGNVTTIFQQMYANTNRYHEMLNSVRDFLKLYQVPKGLSERVMDYIVSTWSMSRGIDTEKVLQICPKDMRADICVHLNRKVFKEHPAFRLASDGCLRALAMEFQTVHCAPGDLIYHAGESVDSLCFVVSGSLEVIQDDEVVAILGKGDVFGDVFWKEATLAQSCANVRALTYCDLHVIKRDALQKVLEFYTAFSHSFSRNLILTYNLRKRIVFRKISDVKREEEERMKRKNEAPLILPPDHPVRRLFQRFRQQKEARLAAERGGRDLDDLDVEKGNVLTEHASANHSLVKASVVTVRESPATPVSFQAASTSGVPDHAKLQAPGSECLGPKGGGGDCAKRKSWARFKDACGKSEDWNKVSKAESMETLPERTKASGEATLKKTDSCDSGITKSDLRLDNVGEARSPQDRSPILAEVKHSFYPIPEQTLQATVLEVRHELKEDIKALNAKMTNIEKQLSEILRILTSRRSSQSPQELFEISRPQSPESERDIFGAS.

Residues 1–220 lie on the Cytoplasmic side of the membrane; that stretch reads MTMAGGRRGL…LHYCVFKTTW (220 aa). The PAS domain occupies 14-94; it reads QNTFLENIVR…QTFENYEMNS (81 aa). Positions 93 to 145 constitute a PAC domain; sequence NSFEILMYKKNRTPVWFFVKIAPIRNEQDKVVLFLCTFSDITAFKQPIEDDSC. Positions 151 to 162 are required for phosphatidylinositol bisphosphate binding; that stretch reads FARLTRALTSSR. The helical transmembrane segment at 221-241 threads the bilayer; it reads DWIILILTFYTAILVPYNVSF. The Extracellular portion of the chain corresponds to 242–248; it reads KTRQNNV. The helical transmembrane segment at 249–269 threads the bilayer; the sequence is AWLVVDSIVDVIFLVDIVLNF. Over 270 to 290 the chain is Cytoplasmic; that stretch reads HTTFVGPAGEVISDPKLIRMN. Residues 291-309 form a helical membrane-spanning segment; sequence YLKTWFVIDLLSCLPYDVI. The Extracellular segment spans residues 310-345; the sequence is NAFENVDEVSAFMGDPGKIGFADQIPPPLEGRESQG. A helical; Voltage-sensor transmembrane segment spans residues 346–368; sequence ISSLFSSLKVVRLLRLGRVARKL. The Cytoplasmic portion of the chain corresponds to 369–377; the sequence is DHYIEYGAA. Residues 378–399 traverse the membrane as a helical segment; that stretch reads VLVLLVCVFGLAAHWMACIWYS. Over 400-448 the chain is Extracellular; sequence IGDYEIFDEDTKTIRNNSWLYQLAMDIGTPYQFNGSGSGKWEGGPSKNS. Asn415 and Asn433 each carry an N-linked (GlcNAc...) asparagine glycan. Positions 449–470 form an intramembrane region, pore-forming; the sequence is VYISSLYFTMTSLTSVGFGNIA. Residues 463 to 468 carry the Selectivity filter motif; sequence SVGFGN. At 471 to 477 the chain is on the extracellular side; that stretch reads PSTDIEK. The helical transmembrane segment at 478 to 498 threads the bilayer; the sequence is IFAVAIMMIGSLLYATIFGNV. Over 499–989 the chain is Cytoplasmic; it reads TTIFQQMYAN…ESERDIFGAS (491 aa). The segment at 673-770 is calmodulin-binding; sequence KRDALQKVLE…LDDLDVEKGN (98 aa). The tract at residues 699–701 is interaction with cyclic nucleotide-binding pocket; it reads YNL. The span at 855-879 shows a compositional bias: basic and acidic residues; sequence KAESMETLPERTKASGEATLKKTDS. Disordered stretches follow at residues 855–886 and 962–989; these read KAESMETLPERTKASGEATLKKTDSCDSGITK and RSSQSPQELFEISRPQSPESERDIFGAS. The interval 924 to 964 is CAD (involved in subunit assembly); it reads ATVLEVRHELKEDIKALNAKMTNIEKQLSEILRILTSRRSS. Ser974, Ser978, and Ser981 each carry phosphoserine. The span at 980 to 989 shows a compositional bias: basic and acidic residues; that stretch reads ESERDIFGAS.

Belongs to the potassium channel family. H (Eag) (TC 1.A.1.20) subfamily. Kv10.1/KCNH1 sub-subfamily. Homomultimer. The potassium channel is composed of a homo- or heterotetrameric complex of pore-forming alpha subunits that can associate with modulating beta subunits. Heteromultimer with KCNH5/EAG2. Interacts with ALG10B. Interacts with RABEP1. Interacts (via C-terminus) with CTTN. Interacts (via C-terminal cytoplasmic region) with Ca(2+)-bound calmodulin. Interacts with the spider kappa-theraphotoxin-Aa1a and mu/kappa-theraphotoxin-Ap1a. In terms of processing, channel activity is regulated via tyrosine phosphorylation/dephosphorylation by SRC and PTPN6. In terms of tissue distribution, highly expressed in brain and in myoblasts at the onset of fusion, but not in other tissues. Detected in HeLa (cervical carcinoma), SH-SY5Y (neuroblastoma) and MCF-7 (epithelial tumor) cells, but not in normal epithelial cells.

The protein localises to the cell membrane. Its subcellular location is the nucleus inner membrane. It localises to the cell projection. It is found in the dendrite. The protein resides in the axon. The protein localises to the presynaptic cell membrane. Its subcellular location is the perikaryon. It localises to the postsynaptic density membrane. It is found in the early endosome membrane. The catalysed reaction is K(+)(in) = K(+)(out). Its activity is regulated as follows. Channel activity is inhibited by interaction with Ca(2+)-bound calmodulin. Interaction of a single pore-forming alpha subunit with a calmodulin chain is sufficient to promote channel closure. Channel activity is not regulated by cyclic nucleotides. Channel activity is inhibited by binding intracellular phosphatidylinositol-3,5-bisphosphate and phosphatidylinositol-4,5-bisphosphate (PIP2), but is not inhibited by phosphatidylinositol 4-phosphate. Inhibited by the spider kappa-theraphotoxin-Aa1a and mu/kappa-theraphotoxin-Ap1a. Its function is as follows. Pore-forming (alpha) subunit of a voltage-gated delayed rectifier potassium channel that mediates outward-rectifying potassium currents which, on depolarization, reaches a steady-state level and do not inactivate. The activation kinetics depend on the prepulse potential and external divalent cation concentration. With negative prepulses, the current activation is delayed and slowed down several fold, whereas more positive prepulses speed up activation. The time course of activation is biphasic with a fast and a slowly activating current component. Activates at more positive membrane potentials and exhibit a steeper activation curve. Channel properties are modulated by subunit assembly. Mediates IK(NI) current in myoblasts. Involved in the regulation of cell proliferation and differentiation, in particular adipogenic and osteogenic differentiation in bone marrow-derived mesenchymal stem cells (MSCs). The polypeptide is Voltage-gated delayed rectifier potassium channel KCNH1 (Homo sapiens (Human)).